The following is a 122-amino-acid chain: Basic phospholipase A2 (122 aa).

Disulfide bonds link Cys-26-Cys-115, Cys-28-Cys-44, Cys-43-Cys-95, Cys-49-Cys-122, Cys-50-Cys-88, Cys-57-Cys-81, and Cys-75-Cys-86. Residues Tyr-27, Gly-29, and Gly-31 each contribute to the Ca(2+) site. His-47 is a catalytic residue. Asp-48 is a Ca(2+) binding site. Residue Asp-89 is part of the active site.

It belongs to the phospholipase A2 family. Group II subfamily. D49 sub-subfamily. It depends on Ca(2+) as a cofactor. Expressed by the venom gland.

The protein resides in the secreted. The catalysed reaction is a 1,2-diacyl-sn-glycero-3-phosphocholine + H2O = a 1-acyl-sn-glycero-3-phosphocholine + a fatty acid + H(+). Its function is as follows. Snake venom phospholipase A2 (PLA2) that does not inhibit platelet aggregation. Exhibits cytotoxic and anticoagulant activity. Induces Ehrlich tumor growth but not angiogenesis. PLA2 catalyzes the calcium-dependent hydrolysis of the 2-acyl groups in 3-sn-phosphoglycerides. The sequence is that of Basic phospholipase A2 from Bothrops leucurus (Whitetail lancehead).